Here is a 1611-residue protein sequence, read N- to C-terminus: Pentafunctional AROM polypeptide (1611 aa).

The segment at 1-406 (MSQVSGGKVP…VEERASTVSD (406 aa)) is 3-dehydroquinate synthase. NAD(+)-binding positions include 64-66 (DTN), 97-100 (EESK), 128-130 (GGV), and Asp-133. Arg-144 serves as a coordination point for 7-phospho-2-dehydro-3-deoxy-D-arabino-heptonate. 153–154 (TT) contacts NAD(+). Asp-160 and Lys-166 together coordinate 7-phospho-2-dehydro-3-deoxy-D-arabino-heptonate. Lys-175 serves as a coordination point for NAD(+). Asn-176 contacts 7-phospho-2-dehydro-3-deoxy-D-arabino-heptonate. NAD(+) is bound by residues 193–196 (WLLT) and Asn-204. Glu-208 provides a ligand contact to Zn(2+). 7-phospho-2-dehydro-3-deoxy-D-arabino-heptonate is bound by residues 208–211 (EVIK) and Lys-272. Catalysis depends on Glu-282, which acts as the Proton acceptor; for 3-dehydroquinate synthase activity. Residues 286 to 290 (RNLVN) and His-293 contribute to the 7-phospho-2-dehydro-3-deoxy-D-arabino-heptonate site. His-293 contacts Zn(2+). His-297 acts as the Proton acceptor; for 3-dehydroquinate synthase activity in catalysis. Positions 309 and 378 each coordinate 7-phospho-2-dehydro-3-deoxy-D-arabino-heptonate. Position 309 (His-309) interacts with Zn(2+). Residues 419–882 (VRESVSAPRP…WDVLGGPLNV (464 aa)) form an EPSP synthase region. Cys-864 functions as the For EPSP synthase activity in the catalytic mechanism. Residues 915–1092 (DASIVLIGMR…VPISPAFFLS (178 aa)) form a shikimate kinase region. ATP is bound at residue 922–929 (GMRASGKS). The 3-dehydroquinase stretch occupies residues 1093–1309 (LTFPRVQDAW…AAPGQMSVRD (217 aa)). The active-site Proton acceptor; for 3-dehydroquinate dehydratase activity is His-1212. Lys-1240 (schiff-base intermediate with substrate; for 3-dehydroquinate dehydratase activity) is an active-site residue. Positions 1322 to 1611 (KRHFFLFGSP…AAYRAAAASM (290 aa)) are shikimate dehydrogenase.

The protein in the N-terminal section; belongs to the sugar phosphate cyclases superfamily. Dehydroquinate synthase family. This sequence in the 2nd section; belongs to the EPSP synthase family. It in the 3rd section; belongs to the shikimate kinase family. In the 4th section; belongs to the type-I 3-dehydroquinase family. The protein in the C-terminal section; belongs to the shikimate dehydrogenase family. As to quaternary structure, homodimer. Requires Zn(2+) as cofactor.

Its subcellular location is the cytoplasm. It catalyses the reaction 7-phospho-2-dehydro-3-deoxy-D-arabino-heptonate = 3-dehydroquinate + phosphate. The enzyme catalyses 3-dehydroquinate = 3-dehydroshikimate + H2O. It carries out the reaction shikimate + NADP(+) = 3-dehydroshikimate + NADPH + H(+). The catalysed reaction is shikimate + ATP = 3-phosphoshikimate + ADP + H(+). It catalyses the reaction 3-phosphoshikimate + phosphoenolpyruvate = 5-O-(1-carboxyvinyl)-3-phosphoshikimate + phosphate. It participates in metabolic intermediate biosynthesis; chorismate biosynthesis; chorismate from D-erythrose 4-phosphate and phosphoenolpyruvate: step 2/7. Its pathway is metabolic intermediate biosynthesis; chorismate biosynthesis; chorismate from D-erythrose 4-phosphate and phosphoenolpyruvate: step 3/7. The protein operates within metabolic intermediate biosynthesis; chorismate biosynthesis; chorismate from D-erythrose 4-phosphate and phosphoenolpyruvate: step 4/7. It functions in the pathway metabolic intermediate biosynthesis; chorismate biosynthesis; chorismate from D-erythrose 4-phosphate and phosphoenolpyruvate: step 5/7. It participates in metabolic intermediate biosynthesis; chorismate biosynthesis; chorismate from D-erythrose 4-phosphate and phosphoenolpyruvate: step 6/7. The AROM polypeptide catalyzes 5 consecutive enzymatic reactions in prechorismate polyaromatic amino acid biosynthesis. In Malassezia globosa (strain ATCC MYA-4612 / CBS 7966) (Dandruff-associated fungus), this protein is Pentafunctional AROM polypeptide.